The primary structure comprises 179 residues: Large ribosomal subunit protein uL5 (179 aa).

This sequence belongs to the universal ribosomal protein uL5 family. As to quaternary structure, part of the 50S ribosomal subunit; part of the 5S rRNA/L5/L18/L25 subcomplex. Contacts the 5S rRNA and the P site tRNA. Forms a bridge to the 30S subunit in the 70S ribosome.

This is one of the proteins that bind and probably mediate the attachment of the 5S RNA into the large ribosomal subunit, where it forms part of the central protuberance. In the 70S ribosome it contacts protein S13 of the 30S subunit (bridge B1b), connecting the 2 subunits; this bridge is implicated in subunit movement. Contacts the P site tRNA; the 5S rRNA and some of its associated proteins might help stabilize positioning of ribosome-bound tRNAs. The protein is Large ribosomal subunit protein uL5 of Nitratidesulfovibrio vulgaris (strain DSM 19637 / Miyazaki F) (Desulfovibrio vulgaris).